We begin with the raw amino-acid sequence, 252 residues long: Fatty acid elongase 4 (252 aa).

Residues 25–45 traverse the membrane as a helical segment; the sequence is LVSWHALVLGHLLYLFVVFVM. N-linked (GlcNAc...) asparagine glycosylation occurs at Asn56. The chain crosses the membrane as a helical span at residues 60–80; it reads VLVVYNVLQICLSAAMAINLS. Residue Asn89 is glycosylated (N-linked (GlcNAc...) asparagine). Transmembrane regions (helical) follow at residues 100–120, 127–147, 150–170, 187–207, and 214–234; these read FWMFVHYCSKYIDMLDTVFIL, QLSFLHVYHHCTIGLIWGILL, GLANGTAFFGTWINSSVHFLM, FLLTKIQMLQFSLCILHAILV, and FTLGWNLLQLLYNASLLVLFL. The short motif at 132–136 is the HxxHH motif element; the sequence is HVYHH. The active-site Nucleophile is the His135.

This sequence belongs to the ELO family.

The protein resides in the membrane. The enzyme catalyses (5Z,8Z,11Z,14Z)-eicosatetraenoyl-CoA + malonyl-CoA + H(+) = (7Z,10Z,13Z,16Z)-3-oxodocosatetraenoyl-CoA + CO2 + CoA. The protein operates within lipid metabolism; fatty acid biosynthesis. In terms of biological role, involved in the synthesis of fatty acids. Elongates arachidonate and other C20 polyunsaturated fatty acids (PUFAs) with a preference for n-6 PUFAs. Not involved in fatty acid synthesis up to C18. The sequence is that of Fatty acid elongase 4 from Trypanosoma brucei brucei (strain 927/4 GUTat10.1).